The chain runs to 121 residues: Ribonuclease P protein component (121 aa).

This sequence belongs to the RnpA family. As to quaternary structure, consists of a catalytic RNA component (M1 or rnpB) and a protein subunit.

The catalysed reaction is Endonucleolytic cleavage of RNA, removing 5'-extranucleotides from tRNA precursor.. Functionally, RNaseP catalyzes the removal of the 5'-leader sequence from pre-tRNA to produce the mature 5'-terminus. It can also cleave other RNA substrates such as 4.5S RNA. The protein component plays an auxiliary but essential role in vivo by binding to the 5'-leader sequence and broadening the substrate specificity of the ribozyme. The protein is Ribonuclease P protein component of Neisseria meningitidis serogroup B (strain ATCC BAA-335 / MC58).